Reading from the N-terminus, the 387-residue chain is MATVIPSPLSLGEDFYREAIEHCRSYNARLCAERSLRLPFLDSQTGVAQNNCYIWMEKTHRGPGLAPGQIYTYPARCWRKKRRLNILEDPRLRPCEYKIDCEAPLKKEGGLPEGPVLEALLCAETGEKKVELKEEETIMDCQKQQLLEFPHDLEVEDLEEDIPRRKNRARGKAYGIGGLRKRQDTASLEDRDKPYVCDICGKRYKNRPGLSYHYTHTHLAEEEGEEHTERHALPFHRKNNHKQFYKELAWVPEAQRKHTAKKAPDGTVIPNGYCDFCLGGSKKTGCPEDLISCADCGRSGHPSCLQFTVNMTAAVRTYRWQCIECKSCSLCGTSENDDQLLFCDDCDRGYHMYCLSPPMAEPPEGSWSCHLCLRHLKEKASAYITLT.

Glycyl lysine isopeptide (Lys-Gly) (interchain with G-Cter in SUMO2) cross-links involve residues lysine 106, lysine 129, and lysine 133. The C2H2-type zinc-finger motif lies at 195–218 (YVCDICGKRYKNRPGLSYHYTHTH). 2 PHD-type zinc fingers span residues 271-328 (NGYC…CKSC) and 325-375 (CKSC…CLRH). Zn(2+) is bound by residues cysteine 274, cysteine 277, cysteine 293, cysteine 296, histidine 301, cysteine 304, cysteine 322, cysteine 325, cysteine 328, cysteine 331, cysteine 343, cysteine 346, histidine 351, cysteine 354, cysteine 369, and cysteine 372.

Belongs to the requiem/DPF family. As to quaternary structure, component of neuron-specific chromatin remodeling complex (nBAF complex) composed of at least, ARID1A/BAF250A or ARID1B/BAF250B, SMARCD1/BAF60A, SMARCD3/BAF60C, SMARCA2/BRM/BAF190B, SMARCA4/BRG1/BAF190A, SMARCB1/BAF47, SMARCC1/BAF155, SMARCE1/BAF57, SMARCC2/BAF170, DPF1/BAF45B, DPF3/BAF45C, ACTL6B/BAF53B and actin. As to expression, at embryonic stages, predominant expression in the nervous system. Expressed specifically in postmitotic neurons (at protein level).

The protein resides in the cytoplasm. The protein localises to the nucleus. In terms of biological role, may have an important role in developing neurons by participating in regulation of cell survival, possibly as a neurospecific transcription factor. Belongs to the neuron-specific chromatin remodeling complex (nBAF complex). During neural development a switch from a stem/progenitor to a postmitotic chromatin remodeling mechanism occurs as neurons exit the cell cycle and become committed to their adult state. The transition from proliferating neural stem/progenitor cells to postmitotic neurons requires a switch in subunit composition of the npBAF and nBAF complexes. As neural progenitors exit mitosis and differentiate into neurons, npBAF complexes which contain ACTL6A/BAF53A and PHF10/BAF45A, are exchanged for homologous alternative ACTL6B/BAF53B and DPF1/BAF45B or DPF3/BAF45C subunits in neuron-specific complexes (nBAF). The npBAF complex is essential for the self-renewal/proliferative capacity of the multipotent neural stem cells. The nBAF complex along with CREST plays a role regulating the activity of genes essential for dendrite growth. In Mus musculus (Mouse), this protein is Zinc finger protein neuro-d4.